Here is a 91-residue protein sequence, read N- to C-terminus: NADH-ubiquinone oxidoreductase chain 4L (91 aa).

A run of 3 helical transmembrane segments spans residues 8-28 (LYFIGMLMLFINRHFLMMILL), 38-58 (LLMLCIYFCFFNLLSIFVFLI), and 59-79 (SIVCEAGLALSLLVMMSFFYG).

This sequence belongs to the complex I subunit 4L family.

Its subcellular location is the mitochondrion membrane. It carries out the reaction a ubiquinone + NADH + 5 H(+)(in) = a ubiquinol + NAD(+) + 4 H(+)(out). Functionally, core subunit of the mitochondrial membrane respiratory chain NADH dehydrogenase (Complex I) that is believed to belong to the minimal assembly required for catalysis. Complex I functions in the transfer of electrons from NADH to the respiratory chain. The immediate electron acceptor for the enzyme is believed to be ubiquinone. This chain is NADH-ubiquinone oxidoreductase chain 4L (ND4L), found in Rhipicephalus sanguineus (Brown dog tick).